A 127-amino-acid polypeptide reads, in one-letter code: Large ribosomal subunit protein uL22 (127 aa).

It belongs to the universal ribosomal protein uL22 family. Part of the 50S ribosomal subunit.

Functionally, this protein binds specifically to 23S rRNA; its binding is stimulated by other ribosomal proteins, e.g. L4, L17, and L20. It is important during the early stages of 50S assembly. It makes multiple contacts with different domains of the 23S rRNA in the assembled 50S subunit and ribosome. The globular domain of the protein is located near the polypeptide exit tunnel on the outside of the subunit, while an extended beta-hairpin is found that lines the wall of the exit tunnel in the center of the 70S ribosome. The chain is Large ribosomal subunit protein uL22 from Methylorubrum populi (strain ATCC BAA-705 / NCIMB 13946 / BJ001) (Methylobacterium populi).